The following is a 277-amino-acid chain: Methyltransferase adrK (277 aa).

S-adenosyl-L-methionine contacts are provided by residues 123–124 (DL), 150–151 (DV), and 151–152 (VL).

The protein belongs to the class I-like SAM-binding methyltransferase superfamily. As to quaternary structure, homodimer.

The protein operates within secondary metabolite biosynthesis; terpenoid biosynthesis. Its function is as follows. Methyltransferase; part of the gene cluster that mediates the biosynthesis of andrastins, meroterpenoid compounds that exhibit inhibitory activity against ras farnesyltransferase, suggesting that they could be promising leads for antitumor agents. The first step of the pathway is the synthesis of 3,5-dimethylorsellinic acid (DMOA) by the polyketide synthase adrD via condensation of one acetyl-CoA starter unit with 3 malonyl-CoA units and 2 methylations. DMAO is then converted to farnesyl-DMAO by the prenyltransferase adrG. The methyltransferase adrK catalyzes the methylation of the carboxyl group of farnesyl-DMAO to farnesyl-DMAO methyl ester which is further converted to epoxyfarnesyl-DMAO methyl ester by the FAD-dependent monooxygenase adrH. The terpene cyclase adrI then catalyzes the carbon skeletal rearrangement to generate the andrastin E, the first compound in the pathway having the andrastin scaffold, with the tetracyclic ring system. The post-cyclization tailoring enzymes adrF, adrE, adrJ, and adrA, are involved in the conversion of andrastin E into andrastin A. The short chain dehydrogenase adrF is responsible for the oxidation of the C-3 a hydroxyl group of andrastin E to yield the corresponding ketone, andrastin D. The ketoreductase adrE stereoselectively reduces the carbonyl moiety to reverse the stereochemistry of the C-3 position to yield andrastin F. The acetyltransferase adrJ is the acetyltransferase that attaches the acetyl group to the C-3 hydroxyl group of andrastin F to yield andrastin C. Finally, the cytochrome P450 monooxygenase adrA catalyzes two sequential oxidation reactions of the C-23 methyl group, to generate the corresponding alcohol andrastin B, and aldehyde andrastin A. In Penicillium rubens (strain ATCC 28089 / DSM 1075 / NRRL 1951 / Wisconsin 54-1255) (Penicillium chrysogenum), this protein is Methyltransferase adrK.